Reading from the N-terminus, the 147-residue chain is Excisionase (147 aa).

Excisionase and integrase are necessary for the excision of prophage from the host genome by site-specific recombination. In Shigella phage SfV (Shigella flexneri bacteriophage V), this protein is Excisionase (xis).